We begin with the raw amino-acid sequence, 192 residues long: Superoxide dismutase [Fe] (192 aa).

Fe cation-binding residues include H27, H74, D157, and H161.

This sequence belongs to the iron/manganese superoxide dismutase family. In terms of assembly, homodimer. Fe cation is required as a cofactor.

The catalysed reaction is 2 superoxide + 2 H(+) = H2O2 + O2. Destroys superoxide anion radicals which are normally produced within the cells and which are toxic to biological systems. The chain is Superoxide dismutase [Fe] (sodB) from Legionella pneumophila subsp. pneumophila (strain Philadelphia 1 / ATCC 33152 / DSM 7513).